Consider the following 312-residue polypeptide: DNA-directed RNA polymerase subunit alpha (312 aa).

The segment at 1–226 (MIEFKKPNIT…EHFKAFESAD (226 aa)) is alpha N-terminal domain (alpha-NTD). The tract at residues 243–312 (KEKKLEMTIE…DLGLSLRQED (70 aa)) is alpha C-terminal domain (alpha-CTD).

Belongs to the RNA polymerase alpha chain family. Homodimer. The RNAP catalytic core consists of 2 alpha, 1 beta, 1 beta' and 1 omega subunit. When a sigma factor is associated with the core the holoenzyme is formed, which can initiate transcription.

The enzyme catalyses RNA(n) + a ribonucleoside 5'-triphosphate = RNA(n+1) + diphosphate. DNA-dependent RNA polymerase catalyzes the transcription of DNA into RNA using the four ribonucleoside triphosphates as substrates. The chain is DNA-directed RNA polymerase subunit alpha from Lactobacillus delbrueckii subsp. bulgaricus (strain ATCC BAA-365 / Lb-18).